The sequence spans 261 residues: Mlc titration factor A (261 aa).

Zn(2+) contacts are provided by histidine 111, histidine 148, histidine 152, and glutamate 211.

It belongs to the MtfA family. Interacts with Mlc. The cofactor is Zn(2+).

Its subcellular location is the cytoplasm. Its function is as follows. Involved in the modulation of the activity of the glucose-phosphotransferase system (glucose-PTS). Interacts with the transcriptional repressor Mlc, preventing its interaction with DNA and leading to the modulation of expression of genes regulated by Mlc, including ptsG, which encodes the PTS system glucose-specific EIICB component. Functionally, shows zinc-dependent metallopeptidase activity. This chain is Mlc titration factor A, found in Edwardsiella ictaluri (strain 93-146).